We begin with the raw amino-acid sequence, 357 residues long: Homoarginine-6-hydroxylase 2-ODD-C23.2 (357 aa).

Residues 208 to 308 (PFWVMRIIGY…RVCVAFFYET (101 aa)) form the Fe2OG dioxygenase domain. Residues His-231, Asp-233, and His-289 each contribute to the Fe cation site. Arg-299 serves as a coordination point for 2-oxoglutarate.

The protein belongs to the iron/ascorbate-dependent oxidoreductase family. Fe(2+) serves as cofactor. Expressed in senescent leaves.

The protein localises to the cytoplasm. It is found in the cytosol. The enzyme catalyses L-homoarginine + 2-oxoglutarate + O2 = 6-hydroxy-L-homoarginine + succinate + CO2. It carries out the reaction L-arginine + 2-oxoglutarate + O2 = 5-hydroxy-L-arginine + succinate + CO2. Its activity is regulated as follows. Slightly inhibited by canavanine (Can), the 5-oxa-analog of arginine. Its function is as follows. 2-oxoglutarate-dependent dioxygenase catalyzing homoarginine 6-hydroxylation and arginine-5-hydroxylation thus producing 6-hydroxy-L-homoarginine and 5-hydroxy-L-arginine, respectively. Guanidine (Gd) is in turn synthesized by the spontaneous conversion of 6-hydroxy-L-homoarginine and 5-hydroxy-L-arginine to (S)-2-amino-6-oxohexanoate (RHEA:79843) and L-glutamate 5-semialdehyde (RHEA:31527); guanidine is a nitrogen-rich compound that may serve as a defense or signaling substance. The protein is Homoarginine-6-hydroxylase 2-ODD-C23.2 of Arabidopsis thaliana (Mouse-ear cress).